A 445-amino-acid polypeptide reads, in one-letter code: Potassium/proton antiporter CemA (445 aa).

4 helical membrane passes run 44 to 64, 330 to 350, 368 to 388, and 405 to 425; these read MQVSVVTFLTLVLVPLGVNIC, ALTCITITFLFFGLKVQILIL, LIIIIVTDLLVGYHSPQGWKL, and FILCFIGTFPVILDTIFKYWI.

This sequence belongs to the CemA family.

Its subcellular location is the plastid. It localises to the chloroplast inner membrane. It catalyses the reaction K(+)(in) + H(+)(out) = K(+)(out) + H(+)(in). In terms of biological role, contributes to K(+)/H(+) antiport activity by supporting proton efflux to control proton extrusion and homeostasis in chloroplasts in a light-dependent manner to modulate photosynthesis. Prevents excessive induction of non-photochemical quenching (NPQ) under continuous-light conditions. Indirectly promotes efficient inorganic carbon uptake into chloroplasts. The protein is Potassium/proton antiporter CemA of Pleurastrum terricola (Filamentous green alga).